Consider the following 457-residue polypeptide: Phosphatidate cytidylyltransferase (457 aa).

6 helical membrane-spanning segments follow: residues 71 to 91 (VMIS…IVLI), 154 to 174 (FIVT…FVLF), 188 to 208 (GSLC…HLII), 214 to 234 (GLFW…FAYL), 255 to 275 (GFLG…RILS), and 330 to 350 (FHAL…GFFA).

Belongs to the CDS family. In terms of assembly, homodimer. Requires Mg(2+) as cofactor.

Its subcellular location is the endoplasmic reticulum membrane. The protein resides in the cytoplasmic vesicle. The protein localises to the secretory vesicle. The enzyme catalyses a 1,2-diacyl-sn-glycero-3-phosphate + CTP + H(+) = a CDP-1,2-diacyl-sn-glycerol + diphosphate. It functions in the pathway phospholipid metabolism; CDP-diacylglycerol biosynthesis; CDP-diacylglycerol from sn-glycerol 3-phosphate: step 3/3. Supplies CDP-diacylglycerol, which may play an important role as both a precursor to phosphoinositide biosynthesis in the plasma membrane and as a negative effector of phosphatidylinositol 4-kinase activity, thereby exerting an effect on cell proliferation via a lipid-dependent signal transduction cascade. The polypeptide is Phosphatidate cytidylyltransferase (CDS1) (Saccharomyces cerevisiae (strain ATCC 204508 / S288c) (Baker's yeast)).